The sequence spans 267 residues: Dolichol-phosphate mannosyltransferase (267 aa).

Serine 2 bears the N-acetylserine mark. At 2–238 (SIEYSVIVPA…QQLKELYVFK (237 aa)) the chain is on the cytoplasmic side. GDP-alpha-D-mannose-binding residues include proline 10, tyrosine 12, glutamate 14, valine 42, aspartate 44, aspartate 95, alanine 96, aspartate 97, glutamine 99, and arginine 122. Mg(2+)-binding residues include aspartate 97 and glutamine 99. Residues aspartate 97 and glutamine 99 each coordinate Mn(2+). Position 141 is a phosphoserine; by PKA (serine 141). Residues lysine 183, arginine 212, and lysine 218 each coordinate GDP-alpha-D-mannose. Residues 239-259 (FGANNLILFITFWSILFFYVC) form a helical; Anchor for type IV membrane protein membrane-spanning segment. At 260–267 (YQLYHLVF) the chain is on the lumenal side.

This sequence belongs to the glycosyltransferase 2 family. Interacts with the C-terminus of SAC1, thereby sequestering it to the endoplasmic reticulum in exponentially growing cells. Under nutrient limitation conditions, this interaction is rapidly abolished. Requires Mg(2+) as cofactor. Mn(2+) is required as a cofactor. The cofactor is Ca(2+).

Its subcellular location is the endoplasmic reticulum membrane. The catalysed reaction is a di-trans,poly-cis-dolichyl phosphate + GDP-alpha-D-mannose = a di-trans,poly-cis-dolichyl beta-D-mannosyl phosphate + GDP. Its pathway is protein modification; protein glycosylation. Its activity is regulated as follows. Inhibited by acetylsalicylic acid (aspirin). In terms of biological role, transfers mannose from GDP-mannose to dolichol monophosphate to form dolichol phosphate mannose (Dol-P-Man) which is the mannosyl donor in pathways leading to N-glycosylation, glycosyl phosphatidylinositol membrane anchoring, and O-mannosylation of proteins. The chain is Dolichol-phosphate mannosyltransferase from Saccharomyces cerevisiae (strain ATCC 204508 / S288c) (Baker's yeast).